We begin with the raw amino-acid sequence, 302 residues long: tRNA dimethylallyltransferase (302 aa).

Glycine 21–serine 28 lines the ATP pocket. Threonine 23–serine 28 serves as a coordination point for substrate.

The protein belongs to the IPP transferase family. As to quaternary structure, monomer. Mg(2+) serves as cofactor.

It carries out the reaction adenosine(37) in tRNA + dimethylallyl diphosphate = N(6)-dimethylallyladenosine(37) in tRNA + diphosphate. Its function is as follows. Catalyzes the transfer of a dimethylallyl group onto the adenine at position 37 in tRNAs that read codons beginning with uridine, leading to the formation of N6-(dimethylallyl)adenosine (i(6)A). In Paracoccus denitrificans (strain Pd 1222), this protein is tRNA dimethylallyltransferase.